The chain runs to 314 residues: Methenyltetrahydromethanopterin cyclohydrolase (314 aa).

The protein belongs to the MCH family.

Its subcellular location is the cytoplasm. The catalysed reaction is 5,10-methenyl-5,6,7,8-tetrahydromethanopterin + H2O = N(5)-formyl-5,6,7,8-tetrahydromethanopterin + H(+). Its pathway is one-carbon metabolism; methanogenesis from CO(2); 5,10-methenyl-5,6,7,8-tetrahydromethanopterin from CO(2): step 3/3. In terms of biological role, catalyzes the reversible interconversion of 5-formyl-H(4)MPT to methenyl-H(4)MPT(+). This Methanoregula boonei (strain DSM 21154 / JCM 14090 / 6A8) protein is Methenyltetrahydromethanopterin cyclohydrolase.